We begin with the raw amino-acid sequence, 372 residues long: Glutamate 5-kinase (372 aa).

Position 14 (K14) interacts with ATP. Substrate is bound by residues S54, D141, and N153. Position 173 to 174 (173 to 174 (TD)) interacts with ATP. Residues 280–358 (RGHVVIDAGA…GEIESVLGYM (79 aa)) form the PUA domain.

This sequence belongs to the glutamate 5-kinase family.

It localises to the cytoplasm. The catalysed reaction is L-glutamate + ATP = L-glutamyl 5-phosphate + ADP. It functions in the pathway amino-acid biosynthesis; L-proline biosynthesis; L-glutamate 5-semialdehyde from L-glutamate: step 1/2. Functionally, catalyzes the transfer of a phosphate group to glutamate to form L-glutamate 5-phosphate. This is Glutamate 5-kinase from Burkholderia lata (strain ATCC 17760 / DSM 23089 / LMG 22485 / NCIMB 9086 / R18194 / 383).